Reading from the N-terminus, the 223-residue chain is Protein-L-isoaspartate O-methyltransferase (223 aa).

The active site involves S70.

Belongs to the methyltransferase superfamily. L-isoaspartyl/D-aspartyl protein methyltransferase family.

Its subcellular location is the cytoplasm. The catalysed reaction is [protein]-L-isoaspartate + S-adenosyl-L-methionine = [protein]-L-isoaspartate alpha-methyl ester + S-adenosyl-L-homocysteine. Its function is as follows. Catalyzes the methyl esterification of L-isoaspartyl residues in peptides and proteins that result from spontaneous decomposition of normal L-aspartyl and L-asparaginyl residues. It plays a role in the repair and/or degradation of damaged proteins. The protein is Protein-L-isoaspartate O-methyltransferase of Methylobacillus flagellatus (strain ATCC 51484 / DSM 6875 / VKM B-1610 / KT).